A 219-amino-acid chain; its full sequence is Lipoprotein-releasing system ATP-binding protein LolD (219 aa).

The ABC transporter domain maps to 3 to 219; that stretch reads IEARNIRKSF…HMRDGLLFSE (217 aa). 35 to 42 provides a ligand contact to ATP; sequence GTSGAGKT.

This sequence belongs to the ABC transporter superfamily. Lipoprotein translocase (TC 3.A.1.125) family. In terms of assembly, the complex is composed of two ATP-binding proteins (LolD) and two transmembrane proteins (LolC and LolE).

It is found in the cell inner membrane. Its function is as follows. Part of the ABC transporter complex LolCDE involved in the translocation of mature outer membrane-directed lipoproteins, from the inner membrane to the periplasmic chaperone, LolA. Responsible for the formation of the LolA-lipoprotein complex in an ATP-dependent manner. This is Lipoprotein-releasing system ATP-binding protein LolD from Porphyromonas gingivalis (strain ATCC BAA-308 / W83).